The chain runs to 596 residues: Elongation factor 4 (596 aa).

Residues 2-183 (NNIRNFSIIA…TIIRKIPPPK (182 aa)) enclose the tr-type G domain. GTP contacts are provided by residues 14 to 19 (DHGKST) and 130 to 133 (NKID).

It belongs to the TRAFAC class translation factor GTPase superfamily. Classic translation factor GTPase family. LepA subfamily.

It is found in the cell inner membrane. It carries out the reaction GTP + H2O = GDP + phosphate + H(+). Functionally, required for accurate and efficient protein synthesis under certain stress conditions. May act as a fidelity factor of the translation reaction, by catalyzing a one-codon backward translocation of tRNAs on improperly translocated ribosomes. Back-translocation proceeds from a post-translocation (POST) complex to a pre-translocation (PRE) complex, thus giving elongation factor G a second chance to translocate the tRNAs correctly. Binds to ribosomes in a GTP-dependent manner. This Campylobacter fetus subsp. fetus (strain 82-40) protein is Elongation factor 4.